We begin with the raw amino-acid sequence, 884 residues long: Cadherin-1 (884 aa).

A signal peptide spans methionine 1–glutamine 23. The propeptide occupies glutamate 24–arginine 156. The interval lysine 119–proline 139 is disordered. Basic residues predominate over residues methionine 121–arginine 131. 5 consecutive Cadherin domains span residues aspartate 157–phenylalanine 264, threonine 265–phenylalanine 377, asparagine 378–phenylalanine 488, methionine 489–proline 595, and isoleucine 596–lysine 699. Residues aspartate 157 to valine 709 are Extracellular-facing. Aspartate 259 is a binding site for Ca(2+). Serine 282 and serine 287 each carry an O-linked (Man...) serine glycan. Residue aspartate 290 coordinates Ca(2+). Threonine 360, threonine 472, threonine 474, and threonine 511 each carry an O-linked (Man...) threonine glycan. Asparagine 560 carries an N-linked (GlcNAc...) asparagine glycan. Residues threonine 578, threonine 580, and threonine 582 are each glycosylated (O-linked (Man...) threonine). Asparagine 639 is a glycosylation site (N-linked (GlcNAc...) asparagine). A helical transmembrane segment spans residues proline 710–leucine 733. Residues arginine 734–aspartate 884 are Cytoplasmic-facing. A disordered region spans residues aspartate 749–glutamate 808. Phosphotyrosine; by SRC is present on residues tyrosine 755, tyrosine 756, and tyrosine 757. Acidic residues predominate over residues tyrosine 757 to phenylalanine 769. Residues glutamate 760–leucine 771 form a required for binding CTNND1 and PSEN1 region. Residue serine 772 is modified to Phosphoserine. Residues arginine 776–arginine 786 are compositionally biased toward basic and acidic residues. Phosphoserine occurs at positions 795, 840, 842, and 848. The interval isoleucine 813–aspartate 884 is required for binding alpha, beta and gamma catenins.

As to quaternary structure, homodimer; disulfide-linked. Component of an E-cadherin/ catenin adhesion complex composed of at least E-cadherin/CDH1, beta-catenin/CTNNB1 or gamma-catenin/JUP, and potentially alpha-catenin/CTNNA1; the complex is located to adherens junctions. Found in a complex composed of CDH1, RAP1A and PKP3; PKP3 acts as a scaffold protein within the complex, the complex is required for CDH1 localization to mature desmosome cell junctions. Interacts with the TRPV4 and CTNNB1 complex. Interacts with CTNND1. The stable association of CTNNA1 is controversial as CTNNA1 was shown not to bind to F-actin when assembled in the complex. Alternatively, the CTNNA1-containing complex may be linked to F-actin by other proteins such as LIMA1. Interaction with PSEN1, cleaves CDH1 resulting in the disassociation of cadherin-based adherens junctions (CAJs). Interacts with AJAP1 and DLGAP5. Interacts with TBC1D2. Interacts with LIMA1. Interacts with CAV1. Interacts with PIP5K1C. Interacts with RAB8B. Interacts with DDR1; this stabilizes CDH1 at the cell surface and inhibits its internalization. Interacts with RAPGEF2. Interacts with KLRG1. Forms a ternary complex composed of ADAM10, CADH1 and EPHA4; within the complex, CADH1 is cleaved by ADAM10 which disrupts adherens junctions. Interacts with SPEF1. Interacts with CTNNB1 and PKP2. Interacts with AMOTL2; the interaction may facilitate binding of radial actin fibers to cell junction complexes. Interacts with DSG3; the interaction is required for CDH1 localization to developing adherens junctions. In terms of processing, during apoptosis or with calcium influx, cleaved by a membrane-bound metalloproteinase (ADAM10), PS1/gamma-secretase and caspase-3. Processing by the metalloproteinase, induced by calcium influx, causes disruption of cell-cell adhesion and the subsequent release of beta-catenin into the cytoplasm. The residual membrane-tethered cleavage product is rapidly degraded via an intracellular proteolytic pathway. Cleavage by caspase-3 releases the cytoplasmic tail resulting in disintegration of the actin microfilament system. The gamma-secretase-mediated cleavage promotes disassembly of adherens junctions. During development of the cochlear organ of Corti, cleavage by ADAM10 at adherens junctions promotes pillar cell separation. O-glycosylated. O-manosylated by TMTC1, TMTC2, TMTC3 or TMTC4. Ser-287 and Thr-511 are O-manosylated by TMTC2 or TMTC4 but not TMTC1 or TMTC3. Post-translationally, N-glycosylation at Asn-639 is essential for expression, folding and trafficking. Addition of bisecting N-acetylglucosamine by MGAT3 modulates its cell membrane location. In terms of processing, ubiquitinated by a SCF complex containing SKP2, which requires prior phosphorylation by CK1/CSNK1A1. Ubiquitinated by CBLL1/HAKAI, requires prior phosphorylation at Tyr-756. Expressed in inner and outer pillar cells of the organ of Corti (at protein level). Expressed in granuloma macrophages (at protein level). Expressed in the epidermal keratinocytes of the skin from birth (at protein level). Expressed in non-neural epithelial tissues.

Its subcellular location is the cell junction. It is found in the adherens junction. The protein resides in the cell membrane. The protein localises to the endosome. It localises to the golgi apparatus. Its subcellular location is the trans-Golgi network. It is found in the cytoplasm. The protein resides in the desmosome. Functionally, cadherins are calcium-dependent cell adhesion proteins. They preferentially interact with themselves in a homophilic manner in connecting cells; cadherins may thus contribute to the sorting of heterogeneous cell types. CDH1 is involved in mechanisms regulating cell-cell adhesions, mobility and proliferation of epithelial cells. Promotes organization of radial actin fiber structure and cellular response to contractile forces, via its interaction with AMOTL2 which facilitates anchoring of radial actin fibers to CDH1 junction complexes at the cell membrane. Plays a role in the early stages of desmosome cell-cell junction formation via facilitating the recruitment of DSG2 and DSP to desmosome plaques. Has a potent invasive suppressor role. It is a ligand for integrin alpha-E/beta-7. E-Cad/CTF2 promotes non-amyloidogenic degradation of Abeta precursors. Has a strong inhibitory effect on APP C99 and C83 production. Its function is as follows. (Microbial infection) Does not function as a receptor for L.monocytogenes internalin A (InlA); mutating a single surface-exposed residue confers receptor activity to this protein and promotes uptake of the bacteria. In Mus musculus (Mouse), this protein is Cadherin-1 (Cdh1).